The sequence spans 536 residues: Chromosomal replication initiator protein DnaA (536 aa).

The domain I, interacts with DnaA modulators stretch occupies residues Met1–Pro72. Residues Pro72–Ser199 are domain II. The disordered stretch occupies residues Arg97–Asn121. A compositionally biased stretch (low complexity) spans Pro105–Asn121. The domain III, AAA+ region stretch occupies residues Lys200 to Ser416. Residues Gly244, Gly246, Lys247, and Thr248 each coordinate ATP. Positions Lys417–Gly536 are domain IV, binds dsDNA.

It belongs to the DnaA family. As to quaternary structure, oligomerizes as a right-handed, spiral filament on DNA at oriC.

Its subcellular location is the cytoplasm. Its function is as follows. Plays an essential role in the initiation and regulation of chromosomal replication. ATP-DnaA binds to the origin of replication (oriC) to initiate formation of the DNA replication initiation complex once per cell cycle. Binds the DnaA box (a 9 base pair repeat at the origin) and separates the double-stranded (ds)DNA. Forms a right-handed helical filament on oriC DNA; dsDNA binds to the exterior of the filament while single-stranded (ss)DNA is stabiized in the filament's interior. The ATP-DnaA-oriC complex binds and stabilizes one strand of the AT-rich DNA unwinding element (DUE), permitting loading of DNA polymerase. After initiation quickly degrades to an ADP-DnaA complex that is not apt for DNA replication. Binds acidic phospholipids. This Burkholderia thailandensis (strain ATCC 700388 / DSM 13276 / CCUG 48851 / CIP 106301 / E264) protein is Chromosomal replication initiator protein DnaA.